The following is a 272-amino-acid chain: Hydroxyethylthiazole kinase (272 aa).

Met-62 is a binding site for substrate. ATP-binding residues include Arg-138 and Thr-183. Residue Gly-210 coordinates substrate.

Belongs to the Thz kinase family. Mg(2+) is required as a cofactor.

It catalyses the reaction 5-(2-hydroxyethyl)-4-methylthiazole + ATP = 4-methyl-5-(2-phosphooxyethyl)-thiazole + ADP + H(+). It participates in cofactor biosynthesis; thiamine diphosphate biosynthesis; 4-methyl-5-(2-phosphoethyl)-thiazole from 5-(2-hydroxyethyl)-4-methylthiazole: step 1/1. Catalyzes the phosphorylation of the hydroxyl group of 4-methyl-5-beta-hydroxyethylthiazole (THZ). The protein is Hydroxyethylthiazole kinase of Dichelobacter nodosus (strain VCS1703A).